A 420-amino-acid polypeptide reads, in one-letter code: Glucose-1-phosphate adenylyltransferase (420 aa).

Residues tyrosine 107, glycine 172, 187–188 (EK), and serine 205 contribute to the alpha-D-glucose 1-phosphate site.

The protein belongs to the bacterial/plant glucose-1-phosphate adenylyltransferase family. As to quaternary structure, homotetramer.

It catalyses the reaction alpha-D-glucose 1-phosphate + ATP + H(+) = ADP-alpha-D-glucose + diphosphate. Its pathway is glycan biosynthesis; glycogen biosynthesis. In terms of biological role, involved in the biosynthesis of ADP-glucose, a building block required for the elongation reactions to produce glycogen. Catalyzes the reaction between ATP and alpha-D-glucose 1-phosphate (G1P) to produce pyrophosphate and ADP-Glc. This Agrobacterium fabrum (strain C58 / ATCC 33970) (Agrobacterium tumefaciens (strain C58)) protein is Glucose-1-phosphate adenylyltransferase.